The primary structure comprises 179 residues: Bifunctional protein PyrR (179 aa).

The short motif at Val-100–Thr-112 is the PRPP-binding element.

The protein belongs to the purine/pyrimidine phosphoribosyltransferase family. PyrR subfamily. As to quaternary structure, homodimer and homohexamer; in equilibrium.

It carries out the reaction UMP + diphosphate = 5-phospho-alpha-D-ribose 1-diphosphate + uracil. Functionally, regulates transcriptional attenuation of the pyrimidine nucleotide (pyr) operon by binding in a uridine-dependent manner to specific sites on pyr mRNA. This disrupts an antiterminator hairpin in the RNA and favors formation of a downstream transcription terminator, leading to a reduced expression of downstream genes. Its function is as follows. Also displays a weak uracil phosphoribosyltransferase activity which is not physiologically significant. In Geobacillus sp. (strain WCH70), this protein is Bifunctional protein PyrR.